The following is a 519-amino-acid chain: MDSLHCLETLLLGFFVLLPCFFYFVWKKPNNKIKEPPQPAGAWPIIGHLHLLARGDLPHKILSSFADKNGPVFKIQLGVHQALVVNNSEIAKECFTTNDRFFLNRPSGVAAKIMGYNYVMLGVAPYGPYWRDMRKIIMLEFLSNRRLQSLKHVWHSEISISSKELYKLWETQNIDFCLVDMKQWLADLTLNMSVKMVVGKRFFGSASASACEETESSNCPKTLRNMFRLMGSFVLSDYLPYLRWLDLGGHEKEMKRTVKELDILFKGWLDEHKRKRLSGGKEDDDQDFMDVMLSILEESKLGNDVDTINKTACLAIILGGADTTWATLTWALSLLLNNPNALKKAQDELDLHVGRDRNVDESDLVKLTYIDAIIKETLRLYPPGPLLGPRVVTEDCTIAGYHVRAGTRLIVNAWKIQRDPLVWSQPHEYQPERFLERDVDMKGQHFELIPFGSGRRACPAISLALQVLPLTLAHILHGFELRTPNQNKVDMTETPGIVHAKATPLEVLVAPRISPKCFV.

The chain crosses the membrane as a helical span at residues 6 to 26 (CLETLLLGFFVLLPCFFYFVW). Residue C458 coordinates heme.

It belongs to the cytochrome P450 family. The cofactor is heme. Rhizome-specific expression.

It localises to the membrane. It catalyses the reaction (-)-4'-desmethyl-deoxypodophyllotoxin + reduced [NADPH--hemoprotein reductase] + O2 = 4'-demethylepipodophyllotoxin + oxidized [NADPH--hemoprotein reductase] + H2O + H(+). It functions in the pathway aromatic compound metabolism; phenylpropanoid biosynthesis. Cytochrome P450 involved in the biosynthesis of etoposide, a chemotherapeutic compound of the topoisomerase inhibitor family. Catalyzes the hydroxylation of deoxypodophyllotoxin to form epipodophyllotoxin. In Sinopodophyllum hexandrum (Himalayan may apple), this protein is Demethylepipodophyllotoxin synthase.